A 402-amino-acid polypeptide reads, in one-letter code: Pyridinium-3,5-bisthiocarboxylic acid mononucleotide nickel insertion protein (402 aa).

It belongs to the LarC family.

The catalysed reaction is Ni(II)-pyridinium-3,5-bisthiocarboxylate mononucleotide = pyridinium-3,5-bisthiocarboxylate mononucleotide + Ni(2+). Its function is as follows. Involved in the biosynthesis of a nickel-pincer cofactor ((SCS)Ni(II) pincer complex). Binds Ni(2+), and functions in nickel delivery to pyridinium-3,5-bisthiocarboxylic acid mononucleotide (P2TMN), to form the mature cofactor. Is thus probably required for the activation of nickel-pincer cofactor-dependent enzymes. The polypeptide is Pyridinium-3,5-bisthiocarboxylic acid mononucleotide nickel insertion protein (Thermotoga sp. (strain RQ2)).